A 204-amino-acid polypeptide reads, in one-letter code: MKVGVLALQGDVEEHLEAFRRAAAELNISAEAVRVKRADQLDGLSALAIPGGESTTIGKLAQRLGILDRLRTVVESGVPTLATCAGAVLLAKEVRDSVVGPTGQPLLAVLNAAVVRNAYGRQRDSFEANVDVEGIGTVRAVFIRAPIFAKTWPPARAIAHVDHPRAGRAIVAVRQDHVLATAFHPELTTTAFHKAVLEMAAGRL.

52–54 (GES) provides a ligand contact to L-glutamine. The Nucleophile role is filled by Cys-84. L-glutamine is bound by residues Arg-116 and 143 to 144 (IR). Residues His-184 and Glu-186 each act as charge relay system in the active site.

This sequence belongs to the glutaminase PdxT/SNO family. In the presence of PdxS, forms a dodecamer of heterodimers. Only shows activity in the heterodimer.

It carries out the reaction aldehydo-D-ribose 5-phosphate + D-glyceraldehyde 3-phosphate + L-glutamine = pyridoxal 5'-phosphate + L-glutamate + phosphate + 3 H2O + H(+). The catalysed reaction is L-glutamine + H2O = L-glutamate + NH4(+). Its pathway is cofactor biosynthesis; pyridoxal 5'-phosphate biosynthesis. Its function is as follows. Catalyzes the hydrolysis of glutamine to glutamate and ammonia as part of the biosynthesis of pyridoxal 5'-phosphate. The resulting ammonia molecule is channeled to the active site of PdxS. This chain is Pyridoxal 5'-phosphate synthase subunit PdxT, found in Pyrobaculum arsenaticum (strain DSM 13514 / JCM 11321 / PZ6).